Reading from the N-terminus, the 679-residue chain is Kelch-like protein diablo (679 aa).

Positions 1–48 (MGDLPGGGGGAAGGAGAAGGGGGGGNGAAGSSSSGGGASGSGGGGPGS) are enriched in gly residues. A disordered region spans residues 1 to 84 (MGDLPGGGGG…RLSHTSEKHP (84 aa)). A BTB domain is found at 101-168 (CDVVLNVGGR…CYTAHIIVEE (68 aa)). A BACK domain is found at 203 to 305 (CLGIRAFADT…SPKFLVGTVG (103 aa)). 6 Kelch repeats span residues 352-398 (VLFA…VLND), 400-446 (LYAV…VLDG), 447-493 (FLYA…VLGG), 495-540 (LYAI…VFNN), 542-587 (IYAV…VVNG), and 588-634 (QLYA…VMRA). The disordered stretch occupies residues 643–679 (CDNNSSNNNNNNYNLKHQQQQPQQQQQQQQQQTQQQL). Residues 645-679 (NNSSNNNNNNYNLKHQQQQPQQQQQQQQQQTQQQL) show a composition bias toward low complexity.

Its pathway is protein modification; protein ubiquitination. Functionally, probable substrate-specific adapter of an E3 ubiquitin-protein ligase complex which mediates the ubiquitination and subsequent proteasomal degradation of target proteins. May have a role in synapse differentiation and growth. This is Kelch-like protein diablo from Drosophila willistoni (Fruit fly).